Here is a 461-residue protein sequence, read N- to C-terminus: Mycosin-3 (461 aa).

An N-terminal signal peptide occupies residues 1-25 (MIRAAFACLAATVVVAGWWTPPAWA). Positions 64 to 397 (DPGVPTPSQT…AGNLDAVAAL (334 aa)) constitute a Peptidase S8 domain. Residues Asp95, His126, and Ser342 each act as charge relay system in the active site. A helical membrane pass occupies residues 432-452 (AFAGAAALSVLVGLTAATVAI).

Belongs to the peptidase S8 family.

The protein localises to the cell membrane. The sequence is that of Mycosin-3 from Mycobacterium tuberculosis (strain ATCC 25618 / H37Rv).